We begin with the raw amino-acid sequence, 445 residues long: tRNA(Ile)-lysidine synthase (445 aa).

ATP is bound at residue 19 to 24; the sequence is SGGIDS.

The protein belongs to the tRNA(Ile)-lysidine synthase family.

The protein resides in the cytoplasm. It catalyses the reaction cytidine(34) in tRNA(Ile2) + L-lysine + ATP = lysidine(34) in tRNA(Ile2) + AMP + diphosphate + H(+). In terms of biological role, ligates lysine onto the cytidine present at position 34 of the AUA codon-specific tRNA(Ile) that contains the anticodon CAU, in an ATP-dependent manner. Cytidine is converted to lysidine, thus changing the amino acid specificity of the tRNA from methionine to isoleucine. The protein is tRNA(Ile)-lysidine synthase of Buchnera aphidicola subsp. Schizaphis graminum (strain Sg).